A 168-amino-acid polypeptide reads, in one-letter code: S-ribosylhomocysteine lyase (168 aa).

Fe cation contacts are provided by His-54, His-58, and Cys-128.

This sequence belongs to the LuxS family. As to quaternary structure, homodimer. The cofactor is Fe cation.

It catalyses the reaction S-(5-deoxy-D-ribos-5-yl)-L-homocysteine = (S)-4,5-dihydroxypentane-2,3-dione + L-homocysteine. In terms of biological role, involved in the synthesis of autoinducer 2 (AI-2) which is secreted by bacteria and is used to communicate both the cell density and the metabolic potential of the environment. The regulation of gene expression in response to changes in cell density is called quorum sensing. Catalyzes the transformation of S-ribosylhomocysteine (RHC) to homocysteine (HC) and 4,5-dihydroxy-2,3-pentadione (DPD). The polypeptide is S-ribosylhomocysteine lyase (Histophilus somni (strain 129Pt) (Haemophilus somnus)).